Here is a 680-residue protein sequence, read N- to C-terminus: Methionine--tRNA ligase (680 aa).

The 'HIGH' region motif lies at 15 to 25 (PYANGPVHIGH). Zn(2+)-binding residues include cysteine 147, cysteine 150, cysteine 160, and cysteine 163. A 'KMSKS' region motif is present at residues 332–336 (KISTS). ATP is bound at residue threonine 335. The tRNA-binding domain maps to 579-680 (DFLKLDIRVG…AEVAAGSQVK (102 aa)).

The protein belongs to the class-I aminoacyl-tRNA synthetase family. MetG type 1 subfamily. Homodimer. Zn(2+) serves as cofactor.

It localises to the cytoplasm. The catalysed reaction is tRNA(Met) + L-methionine + ATP = L-methionyl-tRNA(Met) + AMP + diphosphate. Functionally, is required not only for elongation of protein synthesis but also for the initiation of all mRNA translation through initiator tRNA(fMet) aminoacylation. The polypeptide is Methionine--tRNA ligase (Porphyromonas gingivalis (strain ATCC BAA-308 / W83)).